Here is a 291-residue protein sequence, read N- to C-terminus: MEMO1 family protein TON_0132 (291 aa).

This sequence belongs to the MEMO1 family.

This Thermococcus onnurineus (strain NA1) protein is MEMO1 family protein TON_0132.